The primary structure comprises 209 residues: Pyridoxine/pyridoxamine 5'-phosphate oxidase (209 aa).

Residues 7–10 and Lys-64 contribute to the substrate site; that span reads REDY. Residues 59–64, 74–75, Arg-80, and Lys-81 contribute to the FMN site; these read RIVLLK and FT. Residues Tyr-121, Arg-125, and Ser-129 each coordinate substrate. FMN-binding positions include 138-139 and Trp-182; that span reads QS. Residue 188 to 190 coordinates substrate; it reads RLH. FMN is bound at residue Arg-192.

This sequence belongs to the pyridoxamine 5'-phosphate oxidase family. In terms of assembly, homodimer. FMN serves as cofactor.

The catalysed reaction is pyridoxamine 5'-phosphate + O2 + H2O = pyridoxal 5'-phosphate + H2O2 + NH4(+). It carries out the reaction pyridoxine 5'-phosphate + O2 = pyridoxal 5'-phosphate + H2O2. Its pathway is cofactor metabolism; pyridoxal 5'-phosphate salvage; pyridoxal 5'-phosphate from pyridoxamine 5'-phosphate: step 1/1. It participates in cofactor metabolism; pyridoxal 5'-phosphate salvage; pyridoxal 5'-phosphate from pyridoxine 5'-phosphate: step 1/1. Functionally, catalyzes the oxidation of either pyridoxine 5'-phosphate (PNP) or pyridoxamine 5'-phosphate (PMP) into pyridoxal 5'-phosphate (PLP). The protein is Pyridoxine/pyridoxamine 5'-phosphate oxidase of Actinobacillus pleuropneumoniae serotype 3 (strain JL03).